The chain runs to 786 residues: Phenylalanine--tRNA ligase beta subunit (786 aa).

The 112-residue stretch at 39-150 (LRAPDRVVVG…GELKLGKPLH (112 aa)) folds into the tRNA-binding domain. Positions 397–474 (YKPATITVDL…RLLGIDTILA (78 aa)) constitute a B5 domain. The Mg(2+) site is built by D452, D458, E461, and E462. One can recognise an FDX-ACB domain in the interval 693 to 786 (SKFPKLQRDL…LNHRFGAKLR (94 aa)).

The protein belongs to the phenylalanyl-tRNA synthetase beta subunit family. Type 1 subfamily. As to quaternary structure, tetramer of two alpha and two beta subunits. Requires Mg(2+) as cofactor.

The protein resides in the cytoplasm. The enzyme catalyses tRNA(Phe) + L-phenylalanine + ATP = L-phenylalanyl-tRNA(Phe) + AMP + diphosphate + H(+). The protein is Phenylalanine--tRNA ligase beta subunit of Wolinella succinogenes (strain ATCC 29543 / DSM 1740 / CCUG 13145 / JCM 31913 / LMG 7466 / NCTC 11488 / FDC 602W) (Vibrio succinogenes).